The primary structure comprises 312 residues: Urease accessory protein UreD (312 aa).

The tract at residues 1–50 (MRPLAPDARCAPSRPGRGPWYARRPVTTPSDPPAALREPPPPARRAGKAG) is disordered.

It belongs to the UreD family. UreD, UreF and UreG form a complex that acts as a GTP-hydrolysis-dependent molecular chaperone, activating the urease apoprotein by helping to assemble the nickel containing metallocenter of UreC. The UreE protein probably delivers the nickel.

The protein localises to the cytoplasm. In terms of biological role, required for maturation of urease via the functional incorporation of the urease nickel metallocenter. In Sorangium cellulosum (strain So ce56) (Polyangium cellulosum (strain So ce56)), this protein is Urease accessory protein UreD.